The sequence spans 91 residues: NADH-ubiquinone oxidoreductase chain 4L (91 aa).

The next 2 helical transmembrane spans lie at 2–22 (LIMI…QTHL) and 38–58 (LGLG…ALVL).

This sequence belongs to the complex I subunit 4L family.

The protein resides in the mitochondrion membrane. The catalysed reaction is a ubiquinone + NADH + 5 H(+)(in) = a ubiquinol + NAD(+) + 4 H(+)(out). Its function is as follows. Core subunit of the mitochondrial membrane respiratory chain NADH dehydrogenase (Complex I) that is believed to belong to the minimal assembly required for catalysis. Complex I functions in the transfer of electrons from NADH to the respiratory chain. The immediate electron acceptor for the enzyme is believed to be ubiquinone. The sequence is that of NADH-ubiquinone oxidoreductase chain 4L (ND4L) from Branchiostoma floridae (Florida lancelet).